Consider the following 83-residue polypeptide: RNA-binding protein Hfq (83 aa).

The region spanning 9–68 (DPYLNALRKERIPVSIFLVNGIKLQGQIESFDQFVILLKNTVSQMVYKHAISTVVPARNV) is the Sm domain.

This sequence belongs to the Hfq family. As to quaternary structure, homohexamer.

In terms of biological role, RNA chaperone that binds small regulatory RNA (sRNAs) and mRNAs to facilitate mRNA translational regulation in response to envelope stress, environmental stress and changes in metabolite concentrations. Also binds with high specificity to tRNAs. The chain is RNA-binding protein Hfq from Marinobacter nauticus (strain ATCC 700491 / DSM 11845 / VT8) (Marinobacter aquaeolei).